A 430-amino-acid polypeptide reads, in one-letter code: von Willebrand factor (430 aa).

A glycan (N-linked (GlcNAc...) asparagine) is linked at Asn6. A disulfide bridge connects residues Cys9 and Cys12. O-linked (GalNAc...) threonine glycosylation is found at Thr23, Thr30, and Thr31. Cys47 and Cys233 are joined by a disulfide. The VWFA 1; binding site for platelet glycoprotein Ib domain occupies 52–228 (DLVFLLDGSY…DELEQRRDEI (177 aa)). A glycan (O-linked (GalNAc...) threonine) is linked at Thr252. O-linked (GalNAc...) serine glycosylation is present at Ser261. In terms of domain architecture, VWFA 2 spans 273 to 430 (DVVFVLEASD…ITPIFIQDFE (158 aa)). Residues Asn290 and Asn349 are each glycosylated (N-linked (GlcNAc...) asparagine).

Multimeric. Interacts with F8. In terms of processing, N- and O-glycosylated. As to expression, plasma.

The protein resides in the secreted. The protein localises to the extracellular space. Its subcellular location is the extracellular matrix. Its function is as follows. Important in the maintenance of hemostasis, it promotes adhesion of platelets to the sites of vascular injury by forming a molecular bridge between sub-endothelial collagen matrix and platelet-surface receptor complex GPIb-IX-V. Also acts as a chaperone for coagulation factor VIII, delivering it to the site of injury, stabilizing its heterodimeric structure and protecting it from premature clearance from plasma. This is von Willebrand factor from Rattus norvegicus (Rat).